The primary structure comprises 493 residues: 3-octaprenyl-4-hydroxybenzoate carboxy-lyase (493 aa).

Residue asparagine 177 coordinates Mn(2+). Prenylated FMN is bound by residues 180–182 (IYR), 194–196 (RWL), and 199–200 (RG). Residue glutamate 243 participates in Mn(2+) binding. Catalysis depends on aspartate 292, which acts as the Proton donor.

Belongs to the UbiD family. In terms of assembly, homohexamer. It depends on prenylated FMN as a cofactor. The cofactor is Mn(2+).

It is found in the cell membrane. The enzyme catalyses a 4-hydroxy-3-(all-trans-polyprenyl)benzoate + H(+) = a 2-(all-trans-polyprenyl)phenol + CO2. It functions in the pathway cofactor biosynthesis; ubiquinone biosynthesis. In terms of biological role, catalyzes the decarboxylation of 3-octaprenyl-4-hydroxy benzoate to 2-octaprenylphenol, an intermediate step in ubiquinone biosynthesis. The protein is 3-octaprenyl-4-hydroxybenzoate carboxy-lyase of Colwellia psychrerythraea (strain 34H / ATCC BAA-681) (Vibrio psychroerythus).